The primary structure comprises 205 residues: Urease accessory protein UreE (205 aa).

Over residues 178 to 196 (AHFHAGGHGHVHSGHGHGG) the composition is skewed to basic residues. Residues 178–205 (AHFHAGGHGHVHSGHGHGGKHGEHDAES) form a disordered region.

This sequence belongs to the UreE family.

It is found in the cytoplasm. Its function is as follows. Involved in urease metallocenter assembly. Binds nickel. Probably functions as a nickel donor during metallocenter assembly. The sequence is that of Urease accessory protein UreE from Bordetella pertussis (strain Tohama I / ATCC BAA-589 / NCTC 13251).